A 364-amino-acid chain; its full sequence is Phosphoserine aminotransferase (364 aa).

Arginine 46 lines the L-glutamate pocket. Pyridoxal 5'-phosphate contacts are provided by residues 80–81, tryptophan 106, threonine 157, aspartate 176, and glutamine 199; that span reads AR. Lysine 200 is modified (N6-(pyridoxal phosphate)lysine). Residue 241–242 coordinates pyridoxal 5'-phosphate; that stretch reads NT.

Belongs to the class-V pyridoxal-phosphate-dependent aminotransferase family. SerC subfamily. As to quaternary structure, homodimer. Requires pyridoxal 5'-phosphate as cofactor.

The protein localises to the cytoplasm. The enzyme catalyses O-phospho-L-serine + 2-oxoglutarate = 3-phosphooxypyruvate + L-glutamate. It catalyses the reaction 4-(phosphooxy)-L-threonine + 2-oxoglutarate = (R)-3-hydroxy-2-oxo-4-phosphooxybutanoate + L-glutamate. It participates in amino-acid biosynthesis; L-serine biosynthesis; L-serine from 3-phospho-D-glycerate: step 2/3. Its pathway is cofactor biosynthesis; pyridoxine 5'-phosphate biosynthesis; pyridoxine 5'-phosphate from D-erythrose 4-phosphate: step 3/5. In terms of biological role, catalyzes the reversible conversion of 3-phosphohydroxypyruvate to phosphoserine and of 3-hydroxy-2-oxo-4-phosphonooxybutanoate to phosphohydroxythreonine. The sequence is that of Phosphoserine aminotransferase from Vibrio parahaemolyticus serotype O3:K6 (strain RIMD 2210633).